The chain runs to 232 residues: 2,3,4,5-tetrahydropyridine-2,6-dicarboxylate N-acetyltransferase (232 aa).

It belongs to the transferase hexapeptide repeat family. DapH subfamily.

The enzyme catalyses (S)-2,3,4,5-tetrahydrodipicolinate + acetyl-CoA + H2O = L-2-acetamido-6-oxoheptanedioate + CoA. It participates in amino-acid biosynthesis; L-lysine biosynthesis via DAP pathway; LL-2,6-diaminopimelate from (S)-tetrahydrodipicolinate (acetylase route): step 1/3. Functionally, catalyzes the transfer of an acetyl group from acetyl-CoA to tetrahydrodipicolinate. The polypeptide is 2,3,4,5-tetrahydropyridine-2,6-dicarboxylate N-acetyltransferase (Streptococcus pneumoniae (strain Taiwan19F-14)).